Consider the following 53-residue polypeptide: uncharacterized protein (53 aa).

Residues Leu24–Leu44 traverse the membrane as a helical segment.

The protein resides in the membrane. This is an uncharacterized protein from Methanocaldococcus jannaschii (strain ATCC 43067 / DSM 2661 / JAL-1 / JCM 10045 / NBRC 100440) (Methanococcus jannaschii).